The chain runs to 118 residues: Co-chaperonin GroES (118 aa).

It belongs to the GroES chaperonin family. Heptamer of 7 subunits arranged in a ring. Interacts with the chaperonin GroEL.

The protein localises to the cytoplasm. In terms of biological role, together with the chaperonin GroEL, plays an essential role in assisting protein folding. The GroEL-GroES system forms a nano-cage that allows encapsulation of the non-native substrate proteins and provides a physical environment optimized to promote and accelerate protein folding. GroES binds to the apical surface of the GroEL ring, thereby capping the opening of the GroEL channel. The sequence is that of Co-chaperonin GroES from Helicobacter pylori (strain P12).